The sequence spans 301 residues: Ribonuclease Z (301 aa).

Residues histidine 63, histidine 65, aspartate 67, histidine 68, histidine 141, aspartate 204, and histidine 262 each coordinate Zn(2+). The Proton acceptor role is filled by aspartate 67.

Belongs to the RNase Z family. In terms of assembly, homodimer. The cofactor is Zn(2+).

It carries out the reaction Endonucleolytic cleavage of RNA, removing extra 3' nucleotides from tRNA precursor, generating 3' termini of tRNAs. A 3'-hydroxy group is left at the tRNA terminus and a 5'-phosphoryl group is left at the trailer molecule.. Zinc phosphodiesterase, which displays some tRNA 3'-processing endonuclease activity. Probably involved in tRNA maturation, by removing a 3'-trailer from precursor tRNA. This chain is Ribonuclease Z, found in Streptomyces avermitilis (strain ATCC 31267 / DSM 46492 / JCM 5070 / NBRC 14893 / NCIMB 12804 / NRRL 8165 / MA-4680).